The following is a 1673-amino-acid chain: Protein TIC 214 (1673 aa).

6 helical membrane passes run 18–38, 67–87, 90–110, 127–147, 175–195, and 218–238; these read IINS…FSIG, FITG…HLAL, PHTI…CNTH, LSIQ…HFIL, VGWI…VVWI, and SMSI…YYLG.

This sequence belongs to the TIC214 family. Part of the Tic complex.

It is found in the plastid. The protein localises to the chloroplast inner membrane. Functionally, involved in protein precursor import into chloroplasts. May be part of an intermediate translocation complex acting as a protein-conducting channel at the inner envelope. The polypeptide is Protein TIC 214 (Lactuca sativa (Garden lettuce)).